The chain runs to 617 residues: Proline--tRNA ligase (617 aa).

This sequence belongs to the class-II aminoacyl-tRNA synthetase family. ProS type 1 subfamily. Homodimer.

It is found in the cytoplasm. It carries out the reaction tRNA(Pro) + L-proline + ATP = L-prolyl-tRNA(Pro) + AMP + diphosphate. Functionally, catalyzes the attachment of proline to tRNA(Pro) in a two-step reaction: proline is first activated by ATP to form Pro-AMP and then transferred to the acceptor end of tRNA(Pro). As ProRS can inadvertently accommodate and process non-cognate amino acids such as alanine and cysteine, to avoid such errors it has two additional distinct editing activities against alanine. One activity is designated as 'pretransfer' editing and involves the tRNA(Pro)-independent hydrolysis of activated Ala-AMP. The other activity is designated 'posttransfer' editing and involves deacylation of mischarged Ala-tRNA(Pro). The misacylated Cys-tRNA(Pro) is not edited by ProRS. In Treponema pallidum (strain Nichols), this protein is Proline--tRNA ligase.